We begin with the raw amino-acid sequence, 73 residues long: UPF0346 protein lp_1865 (73 aa).

It belongs to the UPF0346 family.

This is UPF0346 protein lp_1865 from Lactiplantibacillus plantarum (strain ATCC BAA-793 / NCIMB 8826 / WCFS1) (Lactobacillus plantarum).